The sequence spans 328 residues: Mitochondrial GTPase 1 (328 aa).

The CP-type G domain maps to 23-211; sequence NKTLKRLKNL…MLDTPGIMTP (189 aa). GTP-binding positions include 70–73, 155–160, and Gly-207; these read NKCD and NTGKSS.

The protein belongs to the TRAFAC class YlqF/YawG GTPase family. MTG1 subfamily.

The protein localises to the mitochondrion inner membrane. In terms of biological role, mitochondrial GTPase involved in assembly of the large ribosomal subunit. Plays a role in expression of the mitochondrial translational machinery. The sequence is that of Mitochondrial GTPase 1 (mtg1) from Schizosaccharomyces pombe (strain 972 / ATCC 24843) (Fission yeast).